The sequence spans 173 residues: Photosystem I assembly protein Ycf3 (173 aa).

3 TPR repeats span residues 35–68 (AFAYYRDGMSAQADGEYAEALENYQEALTLEEDP), 72–105 (SFILYNIALVHTSNGDHQTALDHYLQALDLNPKM), and 120–153 (GQRSEEAGNDDEAERHYDQAAEYWTQAIRLAPNN).

It belongs to the Ycf3 family.

The protein localises to the cellular thylakoid membrane. Its function is as follows. Essential for the assembly of the photosystem I (PSI) complex. May act as a chaperone-like factor to guide the assembly of the PSI subunits. The polypeptide is Photosystem I assembly protein Ycf3 (Synechococcus elongatus (strain ATCC 33912 / PCC 7942 / FACHB-805) (Anacystis nidulans R2)).